The chain runs to 129 residues: Small ribosomal subunit protein uS11 (129 aa).

Part of the 30S ribosomal subunit. Interacts with proteins S7 and S18. Binds to IF-3. May be methylated on an undetermined residue.

Its function is as follows. Located on the platform of the 30S subunit, it bridges several disparate RNA helices of the 16S rRNA. Forms part of the Shine-Dalgarno cleft in the 70S ribosome. The sequence is that of Small ribosomal subunit protein uS11 from Rhodopseudomonas palustris (strain ATCC BAA-98 / CGA009).